Consider the following 160-residue polypeptide: UPF0225 protein CGSHiGG_04185 (160 aa).

Belongs to the UPF0225 family.

The sequence is that of UPF0225 protein CGSHiGG_04185 from Haemophilus influenzae (strain PittGG).